The chain runs to 106 residues: Large ribosomal subunit protein eL42 (106 aa).

Residues Y34–K53 form a disordered region.

Belongs to the eukaryotic ribosomal protein eL42 family. Component of the large ribosomal subunit.

The protein localises to the cytoplasm. Functionally, component of the large ribosomal subunit. The ribosome is a large ribonucleoprotein complex responsible for the synthesis of proteins in the cell. This chain is Large ribosomal subunit protein eL42 (Rpl36a), found in Canis lupus familiaris (Dog).